The sequence spans 143 residues: MFMGEYQHAIDPKGRLFMPARLRESLGEAFVATKGLDGCLFVYPKEEWKRLEEKLKALPFTRADARAFQRFFFSGAGECEVDKQGRILVPAHLREHAALEKDVVIIGAGARVEIWSRERWSKYNEKAAPSYEEVAEKLIDFDL.

2 consecutive SpoVT-AbrB domains span residues 5–47 (EYQH…PKEE) and 76–119 (AGEC…SRER).

The protein belongs to the MraZ family. As to quaternary structure, forms oligomers.

Its subcellular location is the cytoplasm. The protein localises to the nucleoid. The polypeptide is Transcriptional regulator MraZ (Heliobacterium modesticaldum (strain ATCC 51547 / Ice1)).